A 347-amino-acid polypeptide reads, in one-letter code: S-adenosylmethionine:tRNA ribosyltransferase-isomerase (347 aa).

It belongs to the QueA family. Monomer.

The protein localises to the cytoplasm. The catalysed reaction is 7-aminomethyl-7-carbaguanosine(34) in tRNA + S-adenosyl-L-methionine = epoxyqueuosine(34) in tRNA + adenine + L-methionine + 2 H(+). It participates in tRNA modification; tRNA-queuosine biosynthesis. Its function is as follows. Transfers and isomerizes the ribose moiety from AdoMet to the 7-aminomethyl group of 7-deazaguanine (preQ1-tRNA) to give epoxyqueuosine (oQ-tRNA). The sequence is that of S-adenosylmethionine:tRNA ribosyltransferase-isomerase from Methylococcus capsulatus (strain ATCC 33009 / NCIMB 11132 / Bath).